A 446-amino-acid polypeptide reads, in one-letter code: Ribulose bisphosphate carboxylase large chain (446 aa).

Substrate contacts are provided by asparagine 89 and threonine 139. The Proton acceptor role is filled by lysine 141. Residue lysine 143 participates in substrate binding. Lysine 167, aspartate 169, and glutamate 170 together coordinate Mg(2+). At lysine 167 the chain carries N6-carboxylysine. The active-site Proton acceptor is histidine 260. Substrate-binding residues include arginine 261, histidine 293, and serine 345.

The protein belongs to the RuBisCO large chain family. Type I subfamily. Heterohexadecamer of 8 large chains and 8 small chains; disulfide-linked. The disulfide link is formed within the large subunit homodimers. Mg(2+) serves as cofactor. The disulfide bond which can form in the large chain dimeric partners within the hexadecamer appears to be associated with oxidative stress and protein turnover.

Its subcellular location is the plastid. It localises to the chloroplast. The catalysed reaction is 2 (2R)-3-phosphoglycerate + 2 H(+) = D-ribulose 1,5-bisphosphate + CO2 + H2O. The enzyme catalyses D-ribulose 1,5-bisphosphate + O2 = 2-phosphoglycolate + (2R)-3-phosphoglycerate + 2 H(+). RuBisCO catalyzes two reactions: the carboxylation of D-ribulose 1,5-bisphosphate, the primary event in carbon dioxide fixation, as well as the oxidative fragmentation of the pentose substrate in the photorespiration process. Both reactions occur simultaneously and in competition at the same active site. This is Ribulose bisphosphate carboxylase large chain from Exacum affine (Persian violet).